Reading from the N-terminus, the 278-residue chain is WIMGHMVNAVKQIPTFLNDGANAIEADITFKGAVPTYSYHGTPCDFGRVCIRWEYFDVFLQTLRDYTTPGNSKYYEKFILFVLDLKTGSLNNNEVRKAGENVAKGLLKNYWNNGNNGGRAYVVLSLPDIAHYEFIRTFKEVLKAEGHENLLDKVGYDLSGPYLPSLPSLDSVHEAFKKAGVDGHVWLSDGLTNWAPLGDMARLKEIVKRRDSENGFISKVYYWFVDKYSTTRTALDVGVDGIMTNFPYVIIDVLNESGYKDKYRLATYDDNPWETFKK.

Histidine 5 is an active-site residue. 2 residues coordinate Mg(2+): glutamate 25 and aspartate 27. Histidine 40 (nucleophile) is an active-site residue. Cysteine 44 and cysteine 50 form a disulfide bridge. Aspartate 84 serves as a coordination point for Mg(2+).

This sequence belongs to the arthropod phospholipase D family. Class I subfamily. Requires Mg(2+) as cofactor. Expressed by the venom gland.

Its subcellular location is the secreted. The enzyme catalyses an N-(acyl)-sphingosylphosphocholine = an N-(acyl)-sphingosyl-1,3-cyclic phosphate + choline. It catalyses the reaction an N-(acyl)-sphingosylphosphoethanolamine = an N-(acyl)-sphingosyl-1,3-cyclic phosphate + ethanolamine. The catalysed reaction is a 1-acyl-sn-glycero-3-phosphocholine = a 1-acyl-sn-glycero-2,3-cyclic phosphate + choline. It carries out the reaction a 1-acyl-sn-glycero-3-phosphoethanolamine = a 1-acyl-sn-glycero-2,3-cyclic phosphate + ethanolamine. Dermonecrotic toxins cleave the phosphodiester linkage between the phosphate and headgroup of certain phospholipids (sphingolipid and lysolipid substrates), forming an alcohol (often choline) and a cyclic phosphate. This toxin acts on sphingomyelin (SM). It may also act on ceramide phosphoethanolamine (CPE), lysophosphatidylcholine (LPC) and lysophosphatidylethanolamine (LPE), but not on lysophosphatidylserine (LPS), and lysophosphatidylglycerol (LPG). It acts by transphosphatidylation, releasing exclusively cyclic phosphate products as second products. Induces dermonecrosis, hemolysis, increased vascular permeability, edema, inflammatory response, and platelet aggregation. The protein is Dermonecrotic toxin LlSicTox-alphaIII3iii of Loxosceles laeta (South American recluse spider).